We begin with the raw amino-acid sequence, 247 residues long: STING ER exit protein (247 aa).

Position 127 is a phosphoserine (Ser127). Residues 195–216 (EAREIADSYANNARIIEKQLQR) are a coiled coil. The segment at 215-247 (QRKGGKLSDVGIKTKTEDAPPPQKKQRGTLLER) is disordered.

Belongs to the STEEP1 family.

Molecular adapter that stimulates membrane curvature formation and subsequent endoplasmic reticulum exit site (ERES) establishment by recruiting PI3K complex I, leading to COPII vesicle-mediated transport. In Drosophila melanogaster (Fruit fly), this protein is STING ER exit protein.